Consider the following 343-residue polypeptide: Versiconal hemiacetal acetate reductase (343 aa).

The Proton donor role is filled by tyrosine 59. A substrate-binding site is contributed by histidine 144. Residue 229–239 (SPVARGALARP) coordinates NADP(+).

It belongs to the aldo/keto reductase family. Aldo/keto reductase 2 subfamily.

The enzyme catalyses (2S)-versicolorone + NADP(+) = 1'-hydroxyversicolorone + NADPH + H(+). It carries out the reaction (3S)-versiconol acetate + NADP(+) = (2S,3S)-versiconal hemiacetal acetate + NADPH + H(+). It catalyses the reaction (S)-versiconol + NADP(+) = (2S-3S)-versiconal hemiacetal + NADPH + H(+). Functionally, catalyzes 3 reactions: from hydroxyversicolorone (HVN) to versicolorone (VONE), from versiconal hemiacetal acetate (VHA) to versiconol acetate (VOAc) and from versiconal (VHOH) to versiconol (VOH). Probably not an aflatoxin biosynthesis gene: may be involved in the vertical branching steps connecting the main pathway from HVN to VHOH with the side pathway from VONE to VOH. This Aspergillus parasiticus protein is Versiconal hemiacetal acetate reductase (vrdA).